A 260-amino-acid polypeptide reads, in one-letter code: MSKFWLLLLLVAAFQFAHSYPAAEYELDETTNDEVRQFIGDGYFEDEGDDGDEERFKIKPGKVLDKFGKIVGKVLKQLKKVSAVAKVAMKKGAALLKKMGVKISPLKCEEKTCKSCVIFKIPTENSFCLTIRFMKTNIATYLVVAGEINRKSKFEEKLKLGNMPRCVNVEGFIGKVCMKGIEGHAKSSSGQANVNFCLGLVAEKFGVGAKLCGIYANKKVRVKISPQLFPGATSLDGDIVKLDDNGEDATTLDVDEVEID.

Residues 1–19 (MSKFWLLLLLVAAFQFAHS) form the signal peptide. Residues 20–55 (YPAAEYELDETTNDEVRQFIGDGYFEDEGDDGDEER) constitute a propeptide, removed in mature form, probably by the serine protease triapsin.

It belongs to the redulysin-like family. Expressed in salivary glands.

The protein localises to the secreted. Its subcellular location is the target cell membrane. In terms of biological role, pore-forming protein that induces lysis of T.cruzi trypomastigotes, bacteria E.coli and human red blood cells. The parasite lysis is much more important than the hemolysis, probably due to difference in membrane composition. Its action on protozoan parasites and bacteria may indicate a role in the control of microorganism growth in the salivary glands. This is Trialysin from Triatoma infestans (Assassin bug).